A 514-amino-acid polypeptide reads, in one-letter code: MEYPTFTDARRALDAGETSCEALVSSFLERIDARDNEINAFTSVDQDGALNHARYLDSQRERGNPRPLAGLVLAVKDNICIRGYPVSCGSKMLADFSSLYDATVIDRLRDAGAIFIGKTNCDEFAMGSSNETSHFGPVRNPHAPEYVPGGSSGGSAAAVAAGLCHAALGSDTGGSVRQPAAFCGTVGLKPTYGRVSRSGLVAFASSLDVIGPLTRSAEDAATILNVIAGEDERDSTSAPVDVPDYTEGLGDGVEGLRLGLPEEYFAEGLDDDIRRMVTEQVDRLDDAGATVEEVSLPHTEYGVATYYLVATAEASSNLARYDGIRYGHRADLQETKQALQERREELKEELASARAQGDEARADTLEAQLDDEQSTLDALYTRSRTEGFGDEVKRRIMLGTYALSAGYYDKYYEKAQRVRTLIRHDFERAFEDVDALITPTTPTPPFRLGEKTDDPLEMYLNDIYTVTANLAGLPGLTVPIGEHPDTPGLPVGLQVLGPHFDEALLLRIGAAIME.

Catalysis depends on charge relay system residues K76 and S151. S175 serves as the catalytic Acyl-ester intermediate.

This sequence belongs to the amidase family. GatA subfamily. Heterotrimer of A, B and C subunits.

It catalyses the reaction L-glutamyl-tRNA(Gln) + L-glutamine + ATP + H2O = L-glutaminyl-tRNA(Gln) + L-glutamate + ADP + phosphate + H(+). Allows the formation of correctly charged Gln-tRNA(Gln) through the transamidation of misacylated Glu-tRNA(Gln) in organisms which lack glutaminyl-tRNA synthetase. The reaction takes place in the presence of glutamine and ATP through an activated gamma-phospho-Glu-tRNA(Gln). The polypeptide is Glutamyl-tRNA(Gln) amidotransferase subunit A (Salinibacter ruber (strain DSM 13855 / M31)).